The primary structure comprises 207 residues: Large ribosomal subunit protein bL25 (207 aa).

The protein belongs to the bacterial ribosomal protein bL25 family. CTC subfamily. Part of the 50S ribosomal subunit; part of the 5S rRNA/L5/L18/L25 subcomplex. Contacts the 5S rRNA. Binds to the 5S rRNA independently of L5 and L18.

Its function is as follows. This is one of the proteins that binds to the 5S RNA in the ribosome where it forms part of the central protuberance. The sequence is that of Large ribosomal subunit protein bL25 from Orientia tsutsugamushi (strain Boryong) (Rickettsia tsutsugamushi).